Consider the following 548-residue polypeptide: Leucine-rich repeat-containing protein 56 (548 aa).

5 LRR repeats span residues 94-115 (NLIQ…GTSL), 117-138 (QLQV…GSFL), 139-160 (ALKE…CLLE), 161-182 (QLEV…RYLQ), and 186-206 (RLTT…PGPS). One can recognise an LRRCT domain in the interval 207 to 249 (NKAPQDYNYRAEVKKLIPQLHILDEVPTTCTNLPAPQKLSQDW). Residues 405-433 (LTHVQAQDPQKAPIEQEDQTGPKTSLTPL) are disordered.

This sequence belongs to the LRRC56 family. As to quaternary structure, interacts with IFT88.

It is found in the cell projection. Its subcellular location is the cilium. Functionally, required for the assembly of dynein arms. This is Leucine-rich repeat-containing protein 56 (Lrrc56) from Rattus norvegicus (Rat).